We begin with the raw amino-acid sequence, 190 residues long: dCTP deaminase, dUMP-forming (190 aa).

DCTP-binding positions include 101 to 106, D119, 127 to 129, Q148, Y162, and Q174; these read KSSLGR and TLE. The active-site Proton donor/acceptor is the E129. A disordered region spans residues 163 to 190; sequence GSTRVGSKYQGQRGPTPSRSYQNFITST. Polar residues predominate over residues 171 to 190; it reads YQGQRGPTPSRSYQNFITST.

Belongs to the dCTP deaminase family. As to quaternary structure, homotrimer.

It catalyses the reaction dCTP + 2 H2O = dUMP + NH4(+) + diphosphate. Its pathway is pyrimidine metabolism; dUMP biosynthesis; dUMP from dCTP: step 1/1. In terms of biological role, bifunctional enzyme that catalyzes both the deamination of dCTP to dUTP and the hydrolysis of dUTP to dUMP without releasing the toxic dUTP intermediate. This Mycolicibacterium paratuberculosis (strain ATCC BAA-968 / K-10) (Mycobacterium paratuberculosis) protein is dCTP deaminase, dUMP-forming.